Consider the following 92-residue polypeptide: Protein AC152 (92 aa).

Its function is as follows. Acts as a transactivator of AC102 and HE65 genes. Therefore, participates in the global recruitment of G-actin to the host nucleus. The sequence is that of Protein AC152 (AC152) from Autographa californica nuclear polyhedrosis virus (AcMNPV).